Here is an 86-residue protein sequence, read N- to C-terminus: Antitoxin VapB33 (86 aa).

Antitoxin component of a type II toxin-antitoxin (TA) system. Upon expression in M.smegmatis neutralizes the effect of cognate toxin VapC33. The sequence is that of Antitoxin VapB33 (vapB33) from Mycobacterium tuberculosis (strain ATCC 25618 / H37Rv).